We begin with the raw amino-acid sequence, 256 residues long: 5'-nucleotidase SurE (256 aa).

A divalent metal cation contacts are provided by aspartate 8, aspartate 9, serine 40, and asparagine 92.

The protein belongs to the SurE nucleotidase family. Requires a divalent metal cation as cofactor.

It is found in the cytoplasm. The catalysed reaction is a ribonucleoside 5'-phosphate + H2O = a ribonucleoside + phosphate. In terms of biological role, nucleotidase that shows phosphatase activity on nucleoside 5'-monophosphates. In Allorhizobium ampelinum (strain ATCC BAA-846 / DSM 112012 / S4) (Agrobacterium vitis (strain S4)), this protein is 5'-nucleotidase SurE.